Consider the following 98-residue polypeptide: Co-chaperonin GroES (98 aa).

The protein belongs to the GroES chaperonin family. Heptamer of 7 subunits arranged in a ring. Interacts with the chaperonin GroEL.

The protein resides in the cytoplasm. Together with the chaperonin GroEL, plays an essential role in assisting protein folding. The GroEL-GroES system forms a nano-cage that allows encapsulation of the non-native substrate proteins and provides a physical environment optimized to promote and accelerate protein folding. GroES binds to the apical surface of the GroEL ring, thereby capping the opening of the GroEL channel. The protein is Co-chaperonin GroES of Coprothermobacter proteolyticus (strain ATCC 35245 / DSM 5265 / OCM 4 / BT).